A 112-amino-acid chain; its full sequence is Large ribosomal subunit protein eL30 (112 aa).

The protein belongs to the eukaryotic ribosomal protein eL30 family.

In Lupinus luteus (European yellow lupine), this protein is Large ribosomal subunit protein eL30 (RPL30).